We begin with the raw amino-acid sequence, 249 residues long: 2,3-bisphosphoglycerate-dependent phosphoglycerate mutase (249 aa).

Residues 11–18 (RHGESEWN), 24–25 (TG), R63, 90–93 (ERHY), K101, and 117–118 (RR) contribute to the substrate site. The Tele-phosphohistidine intermediate role is filled by H12. E90 functions as the Proton donor/acceptor in the catalytic mechanism. Positions 119–138 (SYDTPPPPIERGSTYSQDAD) are disordered. A substrate-binding site is contributed by 184-185 (GN).

The protein belongs to the phosphoglycerate mutase family. BPG-dependent PGAM subfamily.

It catalyses the reaction (2R)-2-phosphoglycerate = (2R)-3-phosphoglycerate. The protein operates within carbohydrate degradation; glycolysis; pyruvate from D-glyceraldehyde 3-phosphate: step 3/5. Functionally, catalyzes the interconversion of 2-phosphoglycerate and 3-phosphoglycerate. This chain is 2,3-bisphosphoglycerate-dependent phosphoglycerate mutase, found in Mycolicibacterium paratuberculosis (strain ATCC BAA-968 / K-10) (Mycobacterium paratuberculosis).